Here is a 521-residue protein sequence, read N- to C-terminus: Bifunctional dihydrofolate reductase-thymidylate synthase (521 aa).

Positions 17–194 (NYQVVVAGTR…IRHSFVSFVR (178 aa)) constitute a DHFR domain. Val21 is a substrate binding site. NADP(+)-binding positions include Ala23 and 29–35 (GIGKDGV). Asp43 provides a ligand contact to substrate. NADP(+) contacts are provided by residues 67–69 (RKT) and 88–91 (LTRS). Ile130 serves as a coordination point for substrate. Residue 131 to 138 (GGGQVLRE) participates in NADP(+) binding. Thr151 is a binding site for substrate. Positions 197–521 (KSVAETHESN…HQKIEMKMAV (325 aa)) are thymidylate synthase. Arg258 provides a ligand contact to dUMP. Cys403 is an active-site residue. Residues His404, 422–426 (QRSAD), Asn434, and 464–466 (HVY) contribute to the dUMP site.

It in the N-terminal section; belongs to the dihydrofolate reductase family. In the C-terminal section; belongs to the thymidylate synthase family.

The enzyme catalyses (6S)-5,6,7,8-tetrahydrofolate + NADP(+) = 7,8-dihydrofolate + NADPH + H(+). It carries out the reaction dUMP + (6R)-5,10-methylene-5,6,7,8-tetrahydrofolate = 7,8-dihydrofolate + dTMP. It participates in cofactor biosynthesis; tetrahydrofolate biosynthesis; 5,6,7,8-tetrahydrofolate from 7,8-dihydrofolate: step 1/1. Functionally, bifunctional enzyme. Involved in de novo dTMP biosynthesis. Key enzyme in folate metabolism. Can play two different roles depending on the source of dihydrofolate: de novo synthesis of tetrahydrofolate or recycling of the dihydrofolate released as one of the end products of the TS catalyzed reaction. Catalyzes an essential reaction for de novo glycine and purine synthesis, DNA precursor synthesis, and for the conversion of dUMP to dTMP. This Zea mays (Maize) protein is Bifunctional dihydrofolate reductase-thymidylate synthase (DRTS).